The sequence spans 286 residues: Beta-lactamase SHV-29 (286 aa).

The N-terminal stretch at 1–21 (MRYIRLCIISLLATLPLAVHA) is a signal peptide. The active-site Acyl-ester intermediate is the Ser66. A disulfide bridge links Cys73 with Cys119. The active-site Proton acceptor is the Glu164. Substrate is bound at residue 230-232 (KTG).

This sequence belongs to the class-A beta-lactamase family.

The catalysed reaction is a beta-lactam + H2O = a substituted beta-amino acid. The polypeptide is Beta-lactamase SHV-29 (bla) (Klebsiella pneumoniae).